The chain runs to 365 residues: Fatty acid hydroxylase vlmA (365 aa).

The segment at 20-41 (TTIKRRQNDKTKTPKTKPVSKI) is disordered. A glycan (N-linked (GlcNAc...) asparagine) is linked at Asn-47. 4 helical membrane passes run 62 to 82 (ILLQSLLPITVHQLTTLVLSI), 89 to 109 (VHPFLLRLCVIIGYGYAFRFL), 144 to 164 (LNWSLPLTVGSRTVMCVLVAY), and 179 to 199 (WWAWLAVYLSLYPIILDFYYY). Residues 189-335 (LYPIILDFYY…TRIWDRLFGT (147 aa)) form the Fatty acid hydroxylase domain.

This sequence belongs to the sterol desaturase family. TMEM195 subfamily.

Its subcellular location is the membrane. It participates in secondary metabolite biosynthesis. Fatty acid hydroxylase; part of the gene cluster that mediates the biosynthesis of verlamelin, a lipopeptide that exhibits antifungal activity against plant pathogenic fungi. Verlamelin is a cyclic hexadepsipeptide and is bridged by ester bonding between a 5-hydroxytetradecanoic acid moiety and a carboxyl group on the terminal Val of amide-bonded tetradecanoyl-hexapeptide D-allo-Thr-D-Ala-L-Pro-L-Gln-D-Tyr-L-Val. VlmA and vlmB are altogether regarded as essential components in the biosynthesis of 5-hydroxytetradecanoic acid. VlmA catalyzes the hydroxylation at position C5 of tetradecanoic acid produced in primary metabolism, while the precise function of vlmB still remains to be solved. To be loaded onto the waiting NRPS, 5-hydroxytetradecanoic acid is activated in the form of acyladenylate by the AMP-dependent ligase vlmC. VlmS seems to accept the fatty-acyl intermediate onto the initial module to further elongate amino acid residues by the downstream modules. In addition, in the last module at its C-terminus, vlmS contains a surplus condensation (C) domain that may be involved in cyclization, the last step to form verlamelin. In Lecanicillium sp, this protein is Fatty acid hydroxylase vlmA.